Here is a 25-residue protein sequence, read N- to C-terminus: Caerin-2.3 (25 aa).

As to expression, expressed by the skin parotoid and/or rostral glands.

It is found in the secreted. In terms of biological role, acts as a male sex pheromone that attracts females. Has no antimicrobial activity. This Ranoidea caerulea (Green tree frog) protein is Caerin-2.3.